The following is a 338-amino-acid chain: Glyceraldehyde-3-phosphate dehydrogenase (338 aa).

Residues 12–13 (RI), aspartate 34, and arginine 80 each bind NAD(+). D-glyceraldehyde 3-phosphate contacts are provided by residues 151–153 (SCT), threonine 182, 211–212 (TG), and arginine 234. Cysteine 152 serves as the catalytic Nucleophile. Asparagine 316 contacts NAD(+).

This sequence belongs to the glyceraldehyde-3-phosphate dehydrogenase family. In terms of assembly, homotetramer.

It is found in the cytoplasm. It carries out the reaction D-glyceraldehyde 3-phosphate + phosphate + NAD(+) = (2R)-3-phospho-glyceroyl phosphate + NADH + H(+). Its pathway is carbohydrate degradation; glycolysis; pyruvate from D-glyceraldehyde 3-phosphate: step 1/5. The polypeptide is Glyceraldehyde-3-phosphate dehydrogenase (GPD) (Paracoccidioides lutzii (strain ATCC MYA-826 / Pb01) (Paracoccidioides brasiliensis)).